The following is a 135-amino-acid chain: Ribosome-binding factor A (135 aa).

Belongs to the RbfA family. As to quaternary structure, monomer. Binds 30S ribosomal subunits, but not 50S ribosomal subunits or 70S ribosomes.

The protein localises to the cytoplasm. Functionally, one of several proteins that assist in the late maturation steps of the functional core of the 30S ribosomal subunit. Associates with free 30S ribosomal subunits (but not with 30S subunits that are part of 70S ribosomes or polysomes). Required for efficient processing of 16S rRNA. May interact with the 5'-terminal helix region of 16S rRNA. The polypeptide is Ribosome-binding factor A (Caldicellulosiruptor saccharolyticus (strain ATCC 43494 / DSM 8903 / Tp8T 6331)).